Reading from the N-terminus, the 673-residue chain is Polyunsaturated fatty acid 5-lipoxygenase (673 aa).

Residues 2 to 117 (PSYTVTVATG…EIVLRDGRAK (116 aa)) form the PLAT domain. 8 residues coordinate Ca(2+): Gly-17, Thr-18, Asp-19, Asn-44, Asp-45, Glu-47, Asp-79, and Asp-80. The region spanning 118-673 (LARDDQIHIL…PDRIPNSVAI (556 aa)) is the Lipoxygenase domain. Ser-271 carries the post-translational modification Phosphoserine. Fe cation-binding residues include His-367 and His-372. Phosphoserine is present on Ser-523. Fe cation-binding residues include His-550, Asn-554, and Ile-673.

It belongs to the lipoxygenase family. As to quaternary structure, homodimer. Interacts with ALOX5AP and LTC4S. Interacts with COTL1, the interaction is required for stability and efficient catalytic activity. Interacts with PIK3R1; this interaction bridges ALOX5 with CD40 after CD40 ligation in B cells and leads to the production of reactive oxygen species (ROS). Interacts (via PLAT domain) with DICER1 (via Dicer dsRNA-binding fold domain); this interaction enhances arachidonate 5-lipoxygenase activity and modifies the miRNA precursor processing activity of DICER1. Fe cation serves as cofactor. Post-translationally, serine phosphorylation by MAPKAPK2 is stimulated by arachidonic acid. Phosphorylation on Ser-523 by PKA has an inhibitory effect. Phosphorylation on Ser-271 prevents export from the nucleus. Phosphorylation at Ser-523 is stimulated by 8-bromo-3',5'-cyclic AMP or prostaglandin E2.

Its subcellular location is the cytoplasm. It is found in the nucleus matrix. The protein localises to the nucleus membrane. The protein resides in the perinuclear region. It localises to the cytosol. Its subcellular location is the nucleus envelope. It is found in the nucleus intermembrane space. The catalysed reaction is (5Z,8Z,11Z,14Z)-eicosatetraenoate + O2 = leukotriene A4 + H2O. It catalyses the reaction 18-HEPE + O2 = (5S)-hydroperoxy-18-hydroxy-(7E,9E,11Z,14Z,16E)-eicosapentaenoate. It carries out the reaction (18R)-hydroxy-(5Z,8Z,11Z,14Z,16E)-eicosapentaenoate + O2 = (5S)-hydroperoxy-(18R)-hydroxy-(6E,8Z,11Z,14Z,16E)-eicosapentaenoate. The enzyme catalyses (18S)-hydroxy-(5Z,8Z,11Z,14Z,16E)-eicosapentaenoate + O2 = (5S)-hydroperoxy-(18S)-hydroxy-(6E,8Z,11Z,14Z,16E)-eicosapentaenoate. The catalysed reaction is (5S)-hydroperoxy-(18S)-hydroxy-(6E,8Z,11Z,14Z,16E)-eicosapentaenoate = (5S,6S)-epoxy-(18S)-hydroxy-(7E,9E,11Z,14Z,16E)-eicosapentaenoate + H2O. It catalyses the reaction (5S)-hydroperoxy-(18R)-hydroxy-(6E,8Z,11Z,14Z,16E)-eicosapentaenoate = (5S,6S)-epoxy-(18R)-hydroxy-(7E,9E,11Z,14Z,16E)-eicosapentaenoate + H2O. It carries out the reaction (5S)-hydroperoxy-18-hydroxy-(7E,9E,11Z,14Z,16E)-eicosapentaenoate = (5S,6S)-epoxy-18-hydroxy-(7E,9E,11Z,14Z,16E)-eicosapentaenoate + H2O. The enzyme catalyses (5Z,8Z,11Z,14Z)-eicosatetraenoate + O2 = (5S)-hydroperoxy-(6E,8Z,11Z,14Z)-eicosatetraenoate. The catalysed reaction is (15S)-hydroxy-(5Z,8Z,11Z,13E)-eicosatetraenoate + O2 = (5S)-hydroperoxy-(15S)-hydroxy-(6E,8Z,11Z,13E)-eicosatetraenoate. It catalyses the reaction (5S)-hydroperoxy-(6E,8Z,11Z,14Z)-eicosatetraenoate = leukotriene A4 + H2O. It carries out the reaction (5Z,8Z,11Z,14Z)-eicosatetraenoate + O2 = (8S)-hydroperoxy-(5Z,9E,11Z,14Z)-eicosatetraenoate. The enzyme catalyses (5Z,8Z,11Z,14Z)-eicosatetraenoate + O2 = (12S)-hydroperoxy-(5Z,8Z,10E,14Z)-eicosatetraenoate. The catalysed reaction is (5Z,8Z)-eicosadienoate + O2 = (5S)-hydroperoxy-(6E,8Z)-eicosadienoate. It catalyses the reaction (12S)-hydroxy-(5Z,8Z,10E,14Z)-eicosatetraenoate + O2 = (5S)-hydroperoxy-(12S)-hydroxy-(6E,8Z,10E,14Z)-eicosatetraenoate. It carries out the reaction (5Z,8Z,11Z,14Z,17Z)-eicosapentaenoate + O2 = 5-hydroperoxy-(6E,8Z,11Z,14Z,17Z)-eicosapentaenoate. The enzyme catalyses (4Z,7Z,10Z,13Z,16Z,19Z)-docosahexaenoate + O2 = (14S)-hydroperoxy-(4Z,7Z,10Z,12E,16Z,19Z)-docosahexaenoate. The catalysed reaction is (4Z,7Z,10Z,13Z,16Z,19Z)-docosahexaenoate + O2 = (7S)-hydroperoxy-(4Z,8E,10Z,13Z,16Z,19Z)-docosahexaenoate. It catalyses the reaction (4Z,7Z,10Z,13Z,16Z,19Z)-docosahexaenoate + O2 = (17S)-hydroperoxy-(4Z,7Z,10Z,13Z,15E,19Z)-docosahexaenoate. It functions in the pathway lipid metabolism; leukotriene A4 biosynthesis. Its function is as follows. Catalyzes the oxygenation of arachidonate to 5-hydroperoxyeicosatetraenoate (5-HPETE) followed by the dehydration to 5,6- epoxyeicosatetraenoate (Leukotriene A4/LTA4), the first two steps in the biosynthesis of leukotrienes, which are potent mediators of inflammation. Also catalyzes the oxygenation of arachidonate into 8-hydroperoxyicosatetraenoate (8-HPETE) and 12-hydroperoxyicosatetraenoate (12-HPETE). Displays lipoxin synthase activity being able to convert (15S)-HETE into a conjugate tetraene. Although arachidonate is the preferred substrate, this enzyme can also metabolize oxidized fatty acids derived from arachidonate such as (15S)-HETE, eicosapentaenoate (EPA) such as (18R)- and (18S)-HEPE or docosahexaenoate (DHA) which lead to the formation of specialized pro-resolving mediators (SPM) lipoxin and resolvins E and D respectively, therefore it participates in anti-inflammatory responses. Oxidation of DHA directly inhibits endothelial cell proliferation and sprouting angiogenesis via peroxisome proliferator-activated receptor gamma (PPARgamma). It does not catalyze the oxygenation of linoleic acid and does not convert (5S)-HETE to lipoxin isomers. In addition to inflammatory processes, it participates in dendritic cell migration, wound healing through an antioxidant mechanism based on heme oxygenase-1 (HO-1) regulation expression, monocyte adhesion to the endothelium via ITGAM expression on monocytes. Moreover, it helps establish an adaptive humoral immunity by regulating primary resting B cells and follicular helper T cells and participates in the CD40-induced production of reactive oxygen species (ROS) after CD40 ligation in B cells through interaction with PIK3R1 that bridges ALOX5 with CD40. May also play a role in glucose homeostasis, regulation of insulin secretion and palmitic acid-induced insulin resistance via AMPK. Can regulate bone mineralization and fat cell differentiation increases in induced pluripotent stem cells. The polypeptide is Polyunsaturated fatty acid 5-lipoxygenase (Mesocricetus auratus (Golden hamster)).